We begin with the raw amino-acid sequence, 194 residues long: Thioredoxin O1, mitochondrial (194 aa).

A mitochondrion-targeting transit peptide spans 1 to 42 (MKGNWSIVRKVLHRQFSTLRSSTPSSRLSTSIRPLVLAPNSI). S75 bears the Phosphoserine mark. The region spanning 89 to 194 (VKSEEEFINA…LKNLMEQLYK (106 aa)) is the Thioredoxin domain. Active-site nucleophile residues include C118 and C121. A disulfide bridge connects residues C118 and C121.

It belongs to the thioredoxin family. Plant O-type subfamily.

The protein localises to the mitochondrion matrix. Its function is as follows. Thiol-disulfide oxidoreductase that may participate in various redox reactions. Possesses insulin disulfide bonds reducing activity. Reduced by thioredoxin reductases NTRA and NTRB. The protein is Thioredoxin O1, mitochondrial of Arabidopsis thaliana (Mouse-ear cress).